A 442-amino-acid chain; its full sequence is Protein cereblon (442 aa).

The tract at residues 1-45 (MAGEGDQQDAAHNMGNHLPLLPAESEEEDEMEVEDQDSKEAKKPN) is disordered. Over residues 24 to 35 (ESEEEDEMEVED) the composition is skewed to acidic residues. Residue Ser-25 is modified to Phosphoserine. A Lon N-terminal domain is found at 81–319 (IPVLPQVMMI…CELDIMNKCT (239 aa)). Positions 318 to 426 (CTSLCCKQCQ…LTRSALLPTI (109 aa)) constitute a CULT domain. Zn(2+) contacts are provided by Cys-323 and Cys-326. 3 residues coordinate (S)-thalidomide: His-378, Trp-380, and Trp-386. Zn(2+)-binding residues include Cys-391 and Cys-394.

Belongs to the CRBN family. As to quaternary structure, interacts with KCNT1. Component of a DCX (DDB1-CUL4-X-box) protein ligase complex, at least composed of CRBN, CUL4A, DDB1 and RBX1. Interacts directly with DDB1. Interacts (in pomalidomide-bound form) with IKZF1 and IKZF3. Interacts with ILF2. Interacts with TRAF6 and ECSIT. Ubiquitinated, ubiquitination is mediated by its own DCX protein ligase complex. In terms of tissue distribution, widely expressed. Highly expressed in brain.

The protein resides in the cytoplasm. It localises to the nucleus. Its subcellular location is the membrane. It participates in protein modification; protein ubiquitination. Substrate recognition component of a DCX (DDB1-CUL4-X-box) E3 protein ligase complex that mediates the ubiquitination and subsequent proteasomal degradation of target proteins, such as MEIS2, ILF2 or GLUL. Normal degradation of key regulatory proteins is required for normal limb outgrowth and expression of the fibroblast growth factor FGF8. Maintains presynaptic glutamate release and consequently cognitive functions, such as memory and learning, by negatively regulating large-conductance calcium-activated potassium (BK) channels in excitatory neurons. Likely to function by regulating the assembly and neuronal surface expression of BK channels via its interaction with KCNT1. May also be involved in regulating anxiety-like behaviors via a BK channel-independent mechanism. Plays a negative role in TLR4 signaling by interacting with TRAF6 and ECSIT, leading to inhibition of ECSIT ubiquitination, an important step of the signaling. The sequence is that of Protein cereblon (CRBN) from Homo sapiens (Human).